A 179-amino-acid polypeptide reads, in one-letter code: Large ribosomal subunit protein uL6 (179 aa).

The protein belongs to the universal ribosomal protein uL6 family. In terms of assembly, part of the 50S ribosomal subunit.

Its function is as follows. This protein binds to the 23S rRNA, and is important in its secondary structure. It is located near the subunit interface in the base of the L7/L12 stalk, and near the tRNA binding site of the peptidyltransferase center. This chain is Large ribosomal subunit protein uL6, found in Trichodesmium erythraeum (strain IMS101).